A 29-amino-acid chain; its full sequence is Trypsin inhibitor 1 (29 aa).

3 cysteine pairs are disulfide-bonded: cysteine 3–cysteine 20, cysteine 10–cysteine 22, and cysteine 16–cysteine 28.

This sequence belongs to the protease inhibitor I7 (squash-type serine protease inhibitor) family.

It localises to the secreted. Functionally, inhibits trypsin. This Momordica repens protein is Trypsin inhibitor 1.